Reading from the N-terminus, the 188-residue chain is uncharacterized protein (188 aa).

Phosphoserine is present on S14. The segment at 165-188 (RQAMAAKRNRFRKNVRKLPNKKKH) is disordered. Residues 171-188 (KRNRFRKNVRKLPNKKKH) show a composition bias toward basic residues.

It localises to the nucleus. It is found in the nucleolus. This is an uncharacterized protein from Schizosaccharomyces pombe (strain 972 / ATCC 24843) (Fission yeast).